The primary structure comprises 133 residues: Osteocrin (133 aa).

A signal peptide spans Met1 to Ser27. Arginine amide is present on Arg132.

This sequence belongs to the Osteocrin family. Interacts with NPR3. In terms of tissue distribution, enriched in neocortical regions of the developing cerebral cortex. Not expressed in other compartments of the neocortical wall or in brain regions such as the hippocampus, striatum, mediodorsal nucleus of the thalamus and cerebellum. Also expressed in bone. In developing neonatal rib bone, present at high level in osteoblasts on bone-forming surfaces, in newly incorporated osteocytes and in some late hypertrophic chondrocytes (at protein level). In adult bone, localizes specifically to osteoblasts and young osteocytes at bone-forming sites (at protein level).

The protein localises to the secreted. Its function is as follows. Hormone that acts as a regulator of dendritic growth in the developing cerebral cortex in response to sensory experience. Induced in the brain following membrane depolarization and inhibits dendritic branching in neurons of the developing cortex. Probably acts by binding to natriuretic peptide receptor NPR3/NPR-C, thereby preventing binding between NPR3/NPR-C and natriuretic peptides, leading to increase cGMP production. This chain is Osteocrin, found in Homo sapiens (Human).